The primary structure comprises 469 residues: Ribulose bisphosphate carboxylase large chain (469 aa).

Residues 1–2 (MS) constitute a propeptide that is removed on maturation. N-acetylproline is present on P3. K14 carries the post-translational modification N6,N6,N6-trimethyllysine. Substrate contacts are provided by N123 and T173. K175 acts as the Proton acceptor in catalysis. Position 177 (K177) interacts with substrate. Positions 201, 203, and 204 each coordinate Mg(2+). K201 is modified (N6-carboxylysine). The active-site Proton acceptor is the H294. Residues R295, H327, and S379 each contribute to the substrate site.

Belongs to the RuBisCO large chain family. Type I subfamily. Heterohexadecamer of 8 large chains and 8 small chains; disulfide-linked. The disulfide link is formed within the large subunit homodimers. Mg(2+) serves as cofactor. Post-translationally, the disulfide bond which can form in the large chain dimeric partners within the hexadecamer appears to be associated with oxidative stress and protein turnover.

The protein localises to the plastid. Its subcellular location is the chloroplast. The enzyme catalyses 2 (2R)-3-phosphoglycerate + 2 H(+) = D-ribulose 1,5-bisphosphate + CO2 + H2O. It catalyses the reaction D-ribulose 1,5-bisphosphate + O2 = 2-phosphoglycolate + (2R)-3-phosphoglycerate + 2 H(+). Its function is as follows. RuBisCO catalyzes two reactions: the carboxylation of D-ribulose 1,5-bisphosphate, the primary event in carbon dioxide fixation, as well as the oxidative fragmentation of the pentose substrate in the photorespiration process. Both reactions occur simultaneously and in competition at the same active site. In Atriplex patula (Common orache), this protein is Ribulose bisphosphate carboxylase large chain.